We begin with the raw amino-acid sequence, 131 residues long: Large ribosomal subunit protein bL12c (131 aa).

Belongs to the bacterial ribosomal protein bL12 family. In terms of assembly, homodimer. Part of the ribosomal stalk of the 50S ribosomal subunit. Forms a multimeric L10(L12)X complex, where L10 forms an elongated spine to which 2 to 4 L12 dimers bind in a sequential fashion. Binds GTP-bound translation factors.

The protein localises to the plastid. Its subcellular location is the chloroplast. Its function is as follows. Forms part of the ribosomal stalk which helps the ribosome interact with GTP-bound translation factors. Is thus essential for accurate translation. The polypeptide is Large ribosomal subunit protein bL12c (Euglena gracilis).